The sequence spans 517 residues: Probable protein phosphatase 2C 20 (517 aa).

Residues 1-59 form a disordered region; the sequence is MWVMQGERRRARAPWGPPDTGGALLERWISRERRSDSRDASGSAKQRSAMGNSLPVESK. Basic and acidic residues predominate over residues 28–39; that stretch reads WISRERRSDSRD. The 304-residue stretch at 70-373 folds into the PPM-type phosphatase domain; that stretch reads KYVVSSMQGW…DNTTVILVLF (304 aa). Residues Asp105, Gly106, Glu323, and Asp364 each contribute to the Mn(2+) site. The disordered stretch occupies residues 380–517; the sequence is AVPPVDTDTD…PPHDDTYHRW (138 aa). Over residues 402–414 the composition is skewed to polar residues; it reads GSNNATASDNNDP. Residues 438 to 455 are compositionally biased toward low complexity; that stretch reads DATATAVGSSSTTAVAAD. Residues 499-517 show a composition bias toward basic and acidic residues; the sequence is LPRSNPDKSPPHDDTYHRW.

Belongs to the PP2C family. It depends on Mg(2+) as a cofactor. Mn(2+) is required as a cofactor.

It carries out the reaction O-phospho-L-seryl-[protein] + H2O = L-seryl-[protein] + phosphate. The catalysed reaction is O-phospho-L-threonyl-[protein] + H2O = L-threonyl-[protein] + phosphate. This Oryza sativa subsp. japonica (Rice) protein is Probable protein phosphatase 2C 20.